The chain runs to 326 residues: UDP-3-O-acylglucosamine N-acyltransferase (326 aa).

The active-site Proton acceptor is histidine 235.

Belongs to the transferase hexapeptide repeat family. LpxD subfamily. Homotrimer.

It carries out the reaction a UDP-3-O-[(3R)-3-hydroxyacyl]-alpha-D-glucosamine + a (3R)-hydroxyacyl-[ACP] = a UDP-2-N,3-O-bis[(3R)-3-hydroxyacyl]-alpha-D-glucosamine + holo-[ACP] + H(+). It participates in bacterial outer membrane biogenesis; LPS lipid A biosynthesis. In terms of biological role, catalyzes the N-acylation of UDP-3-O-acylglucosamine using 3-hydroxyacyl-ACP as the acyl donor. Is involved in the biosynthesis of lipid A, a phosphorylated glycolipid that anchors the lipopolysaccharide to the outer membrane of the cell. The sequence is that of UDP-3-O-acylglucosamine N-acyltransferase from Helicobacter hepaticus (strain ATCC 51449 / 3B1).